Consider the following 278-residue polypeptide: 4-deoxy-L-threo-5-hexosulose-uronate ketol-isomerase (278 aa).

The Zn(2+) site is built by His196, His198, Glu203, and His245.

The protein belongs to the KduI family. Zn(2+) is required as a cofactor.

The enzyme catalyses 5-dehydro-4-deoxy-D-glucuronate = 3-deoxy-D-glycero-2,5-hexodiulosonate. Its pathway is glycan metabolism; pectin degradation; 2-dehydro-3-deoxy-D-gluconate from pectin: step 4/5. Catalyzes the isomerization of 5-dehydro-4-deoxy-D-glucuronate to 3-deoxy-D-glycero-2,5-hexodiulosonate. The protein is 4-deoxy-L-threo-5-hexosulose-uronate ketol-isomerase of Shigella flexneri.